The primary structure comprises 89 residues: Putative regulatory protein BPUM_1466 (89 aa).

It belongs to the RemA family.

This chain is Putative regulatory protein BPUM_1466, found in Bacillus pumilus (strain SAFR-032).